A 435-amino-acid polypeptide reads, in one-letter code: 3-ketoacyl-CoA thiolase (435 aa).

Cys-98 (acyl-thioester intermediate) is an active-site residue. Active-site proton acceptor residues include His-391 and Cys-421.

It belongs to the thiolase-like superfamily. Thiolase family. Heterotetramer of two alpha chains (FadJ) and two beta chains (FadI).

The protein localises to the cytoplasm. It catalyses the reaction an acyl-CoA + acetyl-CoA = a 3-oxoacyl-CoA + CoA. It participates in lipid metabolism; fatty acid beta-oxidation. In terms of biological role, catalyzes the final step of fatty acid oxidation in which acetyl-CoA is released and the CoA ester of a fatty acid two carbons shorter is formed. This chain is 3-ketoacyl-CoA thiolase, found in Vibrio cholerae serotype O1 (strain ATCC 39541 / Classical Ogawa 395 / O395).